A 714-amino-acid polypeptide reads, in one-letter code: MSRIIMLIPTGTSVGLTSVSLGVIRAMERKGVRLSVFKPIAQPRTGGDAPDQTTTIVRANSSTTTAAEPLKMSYVEGLLSSNQKDVLMEEIVANYHANTKDAEVVLVEGLVPTRKHQFAQSLNYEIAKTLNAEIVFVMSQGTDTPEQLKERIELTRNSFGGAKNTNITGVIVNKLNAPVDEQGRTRPDLSEIFDDSSKAKVNNVDPAKLQESSPLPVLGAVPWSFDLIATRAIDMARHLNATIINEGDINTRRVKSVTFCARSIPHMLEHFRAGSLLVTSADRPDVLVAACLAAMNGVEIGALLLTGGYEMDARISKLCERAFATGLPVFMVNTNTWQTSLSLQSFNLEVPVDDHERIEKVQEYVANYINADWIESLTATSERSRRLSPPAFRYQLTELARKAGKRIVLPEGDEPRTVKAAAICAERGIATCVLLGNPAEINRVAASQGVELGAGIEIVDPEVVRESYVGRLVELRKNKGMTETVAREQLEDNVVLGTLMLEQDEVDGLVSGAVHTTANTIRPPLQLIKTAPGSSLVSSVFFMLLPEQVYVYGDCAINPDPTAEQLAEIAIQSADSAAAFGIEPRVAMLSYSTGTSGAGSDVEKVREATRLAQEKRPDLMIDGPLQYDAAVMADVAKSKAPNSPVAGRATVFIFPDLNTGNTTYKAVQRSADLISIGPMLQGMRKPVNDLSRGALVDDIVYTIALTAIQSAQQQ.

The tract at residues 391-714 is phosphate acetyltransferase; that stretch reads AFRYQLTELA…LTAIQSAQQQ (324 aa).

It in the N-terminal section; belongs to the CobB/CobQ family. The protein in the C-terminal section; belongs to the phosphate acetyltransferase and butyryltransferase family. Homohexamer.

It localises to the cytoplasm. The catalysed reaction is acetyl-CoA + phosphate = acetyl phosphate + CoA. It participates in metabolic intermediate biosynthesis; acetyl-CoA biosynthesis; acetyl-CoA from acetate: step 2/2. Its activity is regulated as follows. Inhibited by NADH and ATP. Pyruvate and PEP act as activators of the acetyl phosphate forming reaction while inhibiting the formation of acetyl-CoA. Its function is as follows. Involved in acetate metabolism. Catalyzes the reversible interconversion of acetyl-CoA and acetyl phosphate. The direction of the overall reaction changes depending on growth conditions. On minimal medium acetyl-CoA is generated. In rich medium acetyl-CoA is converted to acetate and allowing the cell to dump the excess of acetylation potential in exchange for energy in the form of ATP. The main pathway for acetate production during exponential phase. The chain is Phosphate acetyltransferase (pta) from Escherichia coli (strain K12).